We begin with the raw amino-acid sequence, 518 residues long: Two-component response regulator-like PRR1 (518 aa).

A Response regulatory domain is found at 29-147 (RILLCDSDPS…ELLNLWTHVW (119 aa)). Disordered regions lie at residues 172 to 241 (PSDA…PGVM), 266 to 305 (TPTTSSFDSELQKGGNRLDSSDHRGNFSSTTDRSDTGTDV), and 483 to 518 (VRQANYTDITSTGDDISEDEDDDPSSREVEMVSSPE). A compositionally biased stretch (polar residues) spans 196-212 (NQETSTSNQHEYESNPS). The CCT domain occupies 443–485 (RAAALAKFRLKRKERCFDKKVRYVNRKKLAETRPRVRGQFVRQ).

The protein belongs to the ARR-like family. As to quaternary structure, interacts with PIL13. Interacts with PIL15.

The protein localises to the nucleus. Controls photoperiodic flowering response. Seems to be one of the component of the circadian clock. Expression of several members of the ARR-like family is controlled by circadian rhythm. The particular coordinated sequential expression of PRR73, PRR37, PRR95, PRR59 and PPR1 result to circadian waves that may be at the basis of the endogenous circadian clock. In Oryza sativa subsp. japonica (Rice), this protein is Two-component response regulator-like PRR1 (PRR1).